The following is a 139-amino-acid chain: Small ribosomal subunit protein bS16 (139 aa).

A disordered region spans residues 84–139; sequence KGEPAPAPLLQPAEKAARPSFEAIGGEDEGKGEAITQKKKADKKDEAAAESSASEA.

It belongs to the bacterial ribosomal protein bS16 family.

This Streptomyces coelicolor (strain ATCC BAA-471 / A3(2) / M145) protein is Small ribosomal subunit protein bS16.